Consider the following 974-residue polypeptide: Membrane-associated phosphatidylinositol transfer protein 3 (974 aa).

Phosphoserine occurs at positions 30, 31, 109, 295, 298, 321, 343, and 495. Residues 310-347 form a disordered region; the sequence is CSLASSKRLSKSNVDVSSGVEDEDPKRPLPRKQSDSST. Polar residues predominate over residues 312-325; the sequence is LASSKRLSKSNVDV. A DDHD domain is found at 390–594; it reads FDFDVSDFFL…VAFILRQVMR (205 aa). The interval 497-535 is disordered; the sequence is PLLDAPASPPQAPRFQRTERRLSKGSSHSDSSESSDSLA. Low complexity predominate over residues 520 to 533; that stretch reads KGSSHSDSSESSDS. Ser612, Ser907, Ser928, and Ser946 each carry phosphoserine. Positions 927–974 are disordered; the sequence is MSVQQPDPPAANPKPERAQSQPESDKDHERPLPALSWARGPPKFESVP.

The protein belongs to the PtdIns transfer protein family. PI transfer class IIA subfamily. As to quaternary structure, interacts with PTK2B via its C-terminus.

It localises to the endomembrane system. Catalyzes the transfer of phosphatidylinositol and phosphatidylcholine between membranes (in vitro). Binds calcium ions. In Mus musculus (Mouse), this protein is Membrane-associated phosphatidylinositol transfer protein 3 (Pitpnm3).